We begin with the raw amino-acid sequence, 260 residues long: uncharacterized protein (260 aa).

This is an uncharacterized protein from Methanocaldococcus jannaschii (strain ATCC 43067 / DSM 2661 / JAL-1 / JCM 10045 / NBRC 100440) (Methanococcus jannaschii).